Here is a 425-residue protein sequence, read N- to C-terminus: Proteinase-activated receptor 1 (425 aa).

The first 21 residues, 1 to 21 (MGPRRLLLVAACFSLCGPLLS), serve as a signal peptide directing secretion. Residues 22–41 (ARTRARRPESKATNATLDPR) constitute a propeptide that is removed on maturation. 3 N-linked (GlcNAc...) asparagine glycosylation sites follow: Asn35, Asn62, and Asn75. The Extracellular segment spans residues 42-102 (SFLLRNPNDK…SGYLTSSWLT (61 aa)). A helical membrane pass occupies residues 103–128 (LFVPSVYTGVFVVSLPLNIMAIVVFI). Over 129 to 137 (LKMKVKKPA) the chain is Cytoplasmic. Residues 138–157 (VVYMLHLATADVLFVSVLPF) traverse the membrane as a helical segment. At 158–176 (KISYYFSGSDWQFGSELCR) the chain is on the extracellular side. A disulfide bridge connects residues Cys175 and Cys254. Residues 177–198 (FVTAAFYCNMYASILLMTVISI) form a helical membrane-spanning segment. Residues 199 to 218 (DRFLAVVYPMQSLSWRTLGR) lie on the Cytoplasmic side of the membrane. The helical transmembrane segment at 219-239 (ASFTCLAIWALAIAGVVPLLL) threads the bilayer. At 240–268 (KEQTIQVPGLNITTCHDVLNETLLEGYYA) the chain is on the extracellular side. Asn250 and Asn259 each carry an N-linked (GlcNAc...) asparagine glycan. A helical membrane pass occupies residues 269–288 (YYFSAFSAVFFFVPLIISTV). The Cytoplasmic segment spans residues 289–311 (CYVSIIRCLSSSAVANRSKKSRA). Residues 312–334 (LFLSAAVFCIFIICFGPTNVLLI) form a helical membrane-spanning segment. The Extracellular segment spans residues 335–350 (AHYSFLSHTSTTEAAY). A helical transmembrane segment spans residues 351–374 (FAYLLCVCVSSISCCIDPLIYYYA). The Cytoplasmic segment spans residues 375-425 (SSECQRYVYSILCCKESSDPSSYNSSGQLMASKMDTCSSNLNNSIYKKLLT). Ser418 carries the post-translational modification Phosphoserine.

The protein belongs to the G-protein coupled receptor 1 family. Post-translationally, proteolytic cleavage by thrombin generates a new N-terminus that functions as a tethered ligand. Also proteolytically cleaved by cathepsin CTSG. Cleavage at 41-Arg-|-Ser-42 by CTSG results in receptor activation while cleavage at 55-Phe-|-Trp-56 results in inhibition of receptor activation. Phosphorylated in the C-terminal tail; probably mediating desensitization prior to the uncoupling and internalization of the receptor. Platelets and vascular endothelial cells.

The protein resides in the cell membrane. Functionally, high affinity receptor that binds the activated thrombin, leading to calcium release from intracellular stores. The thrombin-activated receptor signaling pathway is mediated through PTX-insensitive G proteins, activation of phospholipase C resulting in the production of 1D-myo-inositol 1,4,5-trisphosphate (InsP3) which binds to InsP3 receptors causing calcium release from the stores. In astrocytes, the calcium released into the cytosol allows the Ca(2+)-dependent release of L-glutamate into the synaptic cleft through BEST1, that targets the neuronal postsynaptic GRIN2A/NMDAR receptor resulting in the synaptic plasticity regulation. May play a role in platelets activation and in vascular development. Mediates up-regulation of pro-inflammatory cytokines, such as MCP-1/CCL2 and IL6, triggered by coagulation factor Xa (F10) in cardiac fibroblasts and umbilical vein endothelial cells. In Homo sapiens (Human), this protein is Proteinase-activated receptor 1.